The primary structure comprises 418 residues: (+)-T-muurolol synthase ((2E,6E)-farnesyl diphosphate cyclizing) (418 aa).

Mg(2+) contacts are provided by D83 and D88. Positions 83–88 (DDEYCD) match the DDXXXD motif motif. Residue R179 participates in substrate binding. N225 and S229 together coordinate Mg(2+). Position 232 (K232) interacts with substrate. E233 is a Mg(2+) binding site. Residue 312 to 313 (RY) participates in substrate binding. A disordered region spans residues 354–418 (LPEPGSDGAD…QQSTWRREHR (65 aa)). The segment covering 402–412 (ASRSSGLQQST) has biased composition (polar residues).

Belongs to the terpene synthase family. Mg(2+) serves as cofactor.

The enzyme catalyses (2E,6E)-farnesyl diphosphate + H2O = (+)-T-muurolol + diphosphate. Its pathway is secondary metabolite biosynthesis; terpenoid biosynthesis. In terms of biological role, catalyzes the conversion of (2E,6E)-farnesyl diphosphate (FPP) into (+)-T-muurolol via a 1,10-cyclization, which requires isomerization of FPP to nerolidyl diphosphate (NPP) and then abstraction of the pyrophosphate from intermediate NPP leading to a (E,Z)-germacradienyl (helminthogermacradienyl) cation. The protein is (+)-T-muurolol synthase ((2E,6E)-farnesyl diphosphate cyclizing) of Streptomyces clavuligerus.